Reading from the N-terminus, the 37-residue chain is MKKRASVRKICDKCRLIRRGGRILVICSNPRHKQGQG.

It belongs to the bacterial ribosomal protein bL36 family.

It is found in the plastid. The polypeptide is Large ribosomal subunit protein bL36c (Cuscuta gronovii (Common dodder)).